The primary structure comprises 196 residues: Mpv17-like protein (196 aa).

The Cytoplasmic segment spans residues methionine 1–proline 16. Residues proline 16–valine 55 are targeting to peroxisomes. The helical transmembrane segment at tryptophan 17 to leucine 34 threads the bilayer. Over glutamine 35–arginine 50 the chain is Lumenal. Residues valine 51–leucine 67 form a helical membrane-spanning segment. The Cytoplasmic portion of the chain corresponds to arginine 68 to glutamine 90. The chain crosses the membrane as a helical span at residues valine 91–leucine 108. Residues glutamine 109 to threonine 150 lie on the Lumenal side of the membrane. A helical membrane pass occupies residues alanine 151–serine 167. Topologically, residues glutamine 168–lysine 196 are cytoplasmic.

This sequence belongs to the peroxisomal membrane protein PXMP2/4 family. Isoform 1 is detected in the kidney (at protein level). Isoform 1 and isoform 2 are expressed in the kidney, heart, liver, lung, pancreas and skeletal muscle.

The protein localises to the peroxisome membrane. Participates in reactive oxygen species metabolism by up- or down-regulation of the genes of antioxidant enzymes. Protective against the mitochondrial apoptotic cascade. This is Mpv17-like protein (MPV17L) from Homo sapiens (Human).